Reading from the N-terminus, the 217-residue chain is Killer cell lectin-like receptor subfamily B member 1F (217 aa).

Residues 1-45 (MDTSRVYGNVKTFRSPGHKQASFPSLSTDACRCPHWHHLALKLGC) are Cytoplasmic-facing. An LCK-binding motif motif is present at residues 31 to 34 (CRCP). The helical; Signal-anchor for type II membrane protein transmembrane segment at 46 to 66 (ATLILLLLTLIGLSVFVRFLV) threads the bilayer. The Extracellular segment spans residues 67 to 217 (QKPLIEKCSM…WICQKTLKHV (151 aa)). The region spanning 101-211 (HRNKCLIISQ…CSSDNHWICQ (111 aa)) is the C-type lectin domain. 2 disulfide bridges follow: cysteine 122-cysteine 210 and cysteine 189-cysteine 202.

As to expression, expressed in natural killer cells and a subset of T-cells.

The protein resides in the membrane. In terms of biological role, binds CLEC2I/Clr-g leading to activation of natural killer cells or stimulation of IL-2 production and proliferation of T-cells in response to antigen stimulation. May contribute to the formation of the immunological synapse between T-cells and antigen-presenting dendritic cells. This is Killer cell lectin-like receptor subfamily B member 1F from Rattus norvegicus (Rat).